The primary structure comprises 444 residues: tRNA modification GTPase MnmE (444 aa).

Residues Arg-25, Glu-83, and Lys-122 each coordinate (6S)-5-formyl-5,6,7,8-tetrahydrofolate. A TrmE-type G domain is found at 218 to 370 (GFKVAIVGKP…IVGRLRDYLD (153 aa)). Residues 228 to 233 (NVGKSS), 247 to 253 (SDEAGTT), and 272 to 275 (DTAG) contribute to the GTP site. Mg(2+) contacts are provided by Ser-232 and Thr-253. Lys-444 serves as a coordination point for (6S)-5-formyl-5,6,7,8-tetrahydrofolate.

Belongs to the TRAFAC class TrmE-Era-EngA-EngB-Septin-like GTPase superfamily. TrmE GTPase family. As to quaternary structure, homodimer. Heterotetramer of two MnmE and two MnmG subunits. It depends on K(+) as a cofactor.

It is found in the cytoplasm. Exhibits a very high intrinsic GTPase hydrolysis rate. Involved in the addition of a carboxymethylaminomethyl (cmnm) group at the wobble position (U34) of certain tRNAs, forming tRNA-cmnm(5)s(2)U34. This chain is tRNA modification GTPase MnmE, found in Campylobacter curvus (strain 525.92).